Here is a 1509-residue protein sequence, read N- to C-terminus: Putative endo-alpha-N-acetylgalactosaminidase (1509 aa).

The first 41 residues, 1–41 (MPFRGRRRQSALRGLSLAATFCLAAGSSGISGALFATPAQA), serve as a signal peptide directing secretion. Ca(2+)-binding residues include aspartate 288, asparagine 290, aspartate 292, lysine 294, and aspartate 299. The catalytic stretch occupies residues 313-585 (GGDDVKNRVV…NLPVKFLQQQ (273 aa)). Position 369 (aspartate 369) interacts with substrate. Aspartate 472 serves as the catalytic Nucleophile. Glutamate 498 serves as the catalytic Proton donor/acceptor. Asparagine 878, glutamate 880, aspartate 926, and tyrosine 929 together coordinate Ca(2+). Disordered regions lie at residues 1176 to 1197 (NGWG…DGPP) and 1403 to 1439 (IKAA…SGGG). Residues 1407–1428 (NPNPGTGSNPGTGSNPGTDPGT) show a composition bias toward low complexity. The span at 1429–1439 (GSAGGNSSGGG) shows a compositional bias: gly residues. The short motif at 1475–1479 (LAETG) is the LPXTG sorting signal element. Threonine 1478 carries the pentaglycyl murein peptidoglycan amidated threonine modification. The propeptide at 1479–1509 (GFSGLVLPLGIGLMLLLIGAAAIIVRRHRHS) is removed by sortase.

It belongs to the glycosyl hydrolase 101 family. A subfamily.

It is found in the secreted. It localises to the cell wall. The enzyme catalyses a 3-O-[beta-D-galactosyl-(1-&gt;3)-N-acetyl-alpha-D-galactosaminyl]-L-threonyl-[protein] + H2O = beta-D-galactosyl-(1-&gt;3)-N-acetyl-D-galactosamine + L-threonyl-[protein]. The catalysed reaction is a 3-O-[beta-D-galactosyl-(1-&gt;3)-N-acetyl-alpha-D-galactosaminyl]-L-seryl-[protein] + H2O = beta-D-galactosyl-(1-&gt;3)-N-acetyl-D-galactosamine + L-seryl-[protein]. In terms of biological role, probably involved in the breakdown of mucin-type O-linked glycans. Specifically removes the T-antigen disaccharide (Gal-beta-1,3-GalNAc-alpha) from extracellular host glycoproteins. The polypeptide is Putative endo-alpha-N-acetylgalactosaminidase (Renibacterium salmoninarum (strain ATCC 33209 / DSM 20767 / JCM 11484 / NBRC 15589 / NCIMB 2235)).